The following is a 127-amino-acid chain: Fluoride-specific ion channel FluC (127 aa).

Helical transmembrane passes span 2 to 22 (LSSL…RWAI), 35 to 55 (LGTL…IAIF), 68 to 88 (LITT…LEVV), and 104 to 124 (LLNL…VVWI). Gly-75 and Thr-78 together coordinate Na(+).

This sequence belongs to the fluoride channel Fluc/FEX (TC 1.A.43) family.

It is found in the cell inner membrane. The catalysed reaction is fluoride(in) = fluoride(out). Na(+) is not transported, but it plays an essential structural role and its presence is essential for fluoride channel function. In terms of biological role, fluoride-specific ion channel. Important for reducing fluoride concentration in the cell, thus reducing its toxicity. The sequence is that of Fluoride-specific ion channel FluC from Serratia proteamaculans (strain 568).